Here is a 405-residue protein sequence, read N- to C-terminus: Arginine biosynthesis bifunctional protein ArgJ (405 aa).

Substrate contacts are provided by Thr-152, Lys-178, Thr-189, Glu-276, Asn-400, and Thr-405. Residue Thr-189 is the Nucleophile of the active site.

The protein belongs to the ArgJ family. In terms of assembly, heterotetramer of two alpha and two beta chains.

It localises to the cytoplasm. It catalyses the reaction N(2)-acetyl-L-ornithine + L-glutamate = N-acetyl-L-glutamate + L-ornithine. The enzyme catalyses L-glutamate + acetyl-CoA = N-acetyl-L-glutamate + CoA + H(+). The protein operates within amino-acid biosynthesis; L-arginine biosynthesis; L-ornithine and N-acetyl-L-glutamate from L-glutamate and N(2)-acetyl-L-ornithine (cyclic): step 1/1. It participates in amino-acid biosynthesis; L-arginine biosynthesis; N(2)-acetyl-L-ornithine from L-glutamate: step 1/4. Its function is as follows. Catalyzes two activities which are involved in the cyclic version of arginine biosynthesis: the synthesis of N-acetylglutamate from glutamate and acetyl-CoA as the acetyl donor, and of ornithine by transacetylation between N(2)-acetylornithine and glutamate. This is Arginine biosynthesis bifunctional protein ArgJ from Pseudomonas aeruginosa (strain ATCC 15692 / DSM 22644 / CIP 104116 / JCM 14847 / LMG 12228 / 1C / PRS 101 / PAO1).